The primary structure comprises 544 residues: MVTIVLNKYKLLNKIGIGQQKLEDLLFNLKSEIKPVDESNIEIEINADRLDLLSSDGIARAIKGLLEKELGEAKYDITDTEYKLIVDNVRTRPYALAAVIYNAKIDLQELIQFQEKLHSTIGRKRKKVAIGIHDLKKIDSKRIEYREVPLSYKFIPLYEKEELTISEVLEKTEQGKLYGNISISNGVSPAIVQEDGEVLSIPPIINSDKTKLDESTKDLFIDVTGTSFEAVAQTLDIIVSNLAEAGGTIGRVKVIKTDNSFQQSSPLLIHKIQNVREEYANKILGIKISEEEICKHITRMRMNCNVENGIIRVTVPQYRVDIINEIDIVEDIAMSIGYNNLEPSKYISTNYGSYDYLTLLERKMRELSIGAGFVEVFNFVLIKNEKILDSKYVKILNPISEEYNAVRNSLIPILLDFLSKNQHAKFPIRIFETGDVVIYDSSTDTGFRNDKRAAYAIMDNKVSYEDVQAPIHYILKTLGIEVNYKEENNDIFIEGRSASIVYENEKIGVIGEINPDVLIRFGIEYPTVIAELYITEIAKKLNKR.

The B5 domain maps to 268–343 (LIHKIQNVRE…MSIGYNNLEP (76 aa)). The Mg(2+) site is built by Asp321, Asp327, Glu330, and Asp331.

The protein belongs to the phenylalanyl-tRNA synthetase beta subunit family. Type 2 subfamily. In terms of assembly, tetramer of two alpha and two beta subunits. Requires Mg(2+) as cofactor.

Its subcellular location is the cytoplasm. It carries out the reaction tRNA(Phe) + L-phenylalanine + ATP = L-phenylalanyl-tRNA(Phe) + AMP + diphosphate + H(+). This Saccharolobus solfataricus (strain ATCC 35092 / DSM 1617 / JCM 11322 / P2) (Sulfolobus solfataricus) protein is Phenylalanine--tRNA ligase beta subunit.